We begin with the raw amino-acid sequence, 221 residues long: uncharacterized protein (221 aa).

Positions 1 to 26 (MVRLVPRAFAATVALLAAGFSPATAS) are cleaved as a signal peptide.

This is an uncharacterized protein from Mycobacterium tuberculosis (strain CDC 1551 / Oshkosh).